Here is a 152-residue protein sequence, read N- to C-terminus: TOMM20-like protein 1 (152 aa).

The Mitochondrial intermembrane segment spans residues 1–6 (MPSVRL). Residues 7 to 27 (GVGLLAGLAAGGAVVLLSYCV) traverse the membrane as a helical segment. The Cytoplasmic portion of the chain corresponds to 28-152 (YLDWRRHRDP…STEHLKDDPD (125 aa)).

The protein belongs to the Tom20 family.

It localises to the mitochondrion outer membrane. The polypeptide is TOMM20-like protein 1 (Tomm20l) (Mus musculus (Mouse)).